Here is a 252-residue protein sequence, read N- to C-terminus: Receptor expression-enhancing protein 2 (252 aa).

A run of 2 helical transmembrane segments spans residues 1–21 (MVSWIISRLVVLIFGTLYPAY) and 35–55 (YVKWMMYWIVFAFFTTAETLT). A Phosphoserine modification is found at Ser-150. A disordered region spans residues 165–252 (LQRPDGRLRP…KKTSGGGDSA (88 aa)). The segment covering 203 to 217 (SRTEASEDDMGDKAP) has biased composition (basic and acidic residues).

It belongs to the DP1 family. Interacts with odorant receptor proteins. As to expression, detected in brain, heart and skeletal muscle, and at low levels in placenta, kidney and pancreas. Expressed in circumvallate papillae.

It is found in the membrane. Functionally, required for endoplasmic reticulum (ER) network formation, shaping and remodeling. May enhance the cell surface expression of odorant receptors. This Homo sapiens (Human) protein is Receptor expression-enhancing protein 2 (REEP2).